The chain runs to 202 residues: GTP cyclohydrolase-2 (202 aa).

48–52 (RLHSE) serves as a coordination point for GTP. Zn(2+)-binding residues include C53, C64, and C66. GTP contacts are provided by residues Q69, 91–93 (EGR), and T113. Catalysis depends on D125, which acts as the Proton acceptor. Residue R127 is the Nucleophile of the active site. The GTP site is built by T148 and K153.

This sequence belongs to the GTP cyclohydrolase II family. Zn(2+) is required as a cofactor.

The catalysed reaction is GTP + 4 H2O = 2,5-diamino-6-hydroxy-4-(5-phosphoribosylamino)-pyrimidine + formate + 2 phosphate + 3 H(+). It functions in the pathway cofactor biosynthesis; riboflavin biosynthesis; 5-amino-6-(D-ribitylamino)uracil from GTP: step 1/4. Functionally, catalyzes the conversion of GTP to 2,5-diamino-6-ribosylamino-4(3H)-pyrimidinone 5'-phosphate (DARP), formate and pyrophosphate. The chain is GTP cyclohydrolase-2 from Colwellia psychrerythraea (strain 34H / ATCC BAA-681) (Vibrio psychroerythus).